The following is a 186-amino-acid chain: Ribosome-recycling factor (186 aa).

Belongs to the RRF family.

The protein localises to the cytoplasm. Its function is as follows. Responsible for the release of ribosomes from messenger RNA at the termination of protein biosynthesis. May increase the efficiency of translation by recycling ribosomes from one round of translation to another. The sequence is that of Ribosome-recycling factor from Cupriavidus taiwanensis (strain DSM 17343 / BCRC 17206 / CCUG 44338 / CIP 107171 / LMG 19424 / R1) (Ralstonia taiwanensis (strain LMG 19424)).